We begin with the raw amino-acid sequence, 393 residues long: Chalcone synthase 1 (393 aa).

The active site involves C166.

The protein belongs to the thiolase-like superfamily. Chalcone/stilbene synthases family.

The catalysed reaction is (E)-4-coumaroyl-CoA + 3 malonyl-CoA + 3 H(+) = 2',4,4',6'-tetrahydroxychalcone + 3 CO2 + 4 CoA. It participates in secondary metabolite biosynthesis; flavonoid biosynthesis. The primary product of this enzyme is 4,2',4',6'-tetrahydroxychalcone (also termed naringenin-chalcone or chalcone) which can under specific conditions spontaneously isomerize into naringenin. The chain is Chalcone synthase 1 (CHS1) from Ruta graveolens (Common rue).